Here is a 337-residue protein sequence, read N- to C-terminus: Phenylalanine--tRNA ligase alpha subunit (337 aa).

A Mg(2+)-binding site is contributed by E252.

The protein belongs to the class-II aminoacyl-tRNA synthetase family. Phe-tRNA synthetase alpha subunit type 1 subfamily. As to quaternary structure, tetramer of two alpha and two beta subunits. It depends on Mg(2+) as a cofactor.

It localises to the cytoplasm. The catalysed reaction is tRNA(Phe) + L-phenylalanine + ATP = L-phenylalanyl-tRNA(Phe) + AMP + diphosphate + H(+). This chain is Phenylalanine--tRNA ligase alpha subunit, found in Francisella philomiragia subsp. philomiragia (strain ATCC 25017 / CCUG 19701 / FSC 153 / O#319-036).